Here is a 394-residue protein sequence, read N- to C-terminus: Elongation factor Tu (394 aa).

The tr-type G domain maps to 10–204; sequence KPHVNIGTIG…AVDSYIPQPV (195 aa). The interval 19 to 26 is G1; sequence GHVDHGKT. Residue 19–26 coordinates GTP; that stretch reads GHVDHGKT. Thr-26 is a binding site for Mg(2+). Residues 60–64 are G2; sequence GITIS. A G3 region spans residues 81–84; it reads DCPG. GTP is bound by residues 81–85 and 136–139; these read DCPGH and NKVD. A G4 region spans residues 136–139; that stretch reads NKVD. Residues 174-176 form a G5 region; it reads SAL.

Belongs to the TRAFAC class translation factor GTPase superfamily. Classic translation factor GTPase family. EF-Tu/EF-1A subfamily. Monomer.

It is found in the cytoplasm. It catalyses the reaction GTP + H2O = GDP + phosphate + H(+). Functionally, GTP hydrolase that promotes the GTP-dependent binding of aminoacyl-tRNA to the A-site of ribosomes during protein biosynthesis. The protein is Elongation factor Tu of Rickettsia felis (strain ATCC VR-1525 / URRWXCal2) (Rickettsia azadi).